The following is a 344-amino-acid chain: uncharacterized protein (344 aa).

It belongs to the glycosyltransferase 28 family.

This is an uncharacterized protein from Methanopyrus kandleri (strain AV19 / DSM 6324 / JCM 9639 / NBRC 100938).